A 357-amino-acid polypeptide reads, in one-letter code: Heat-inducible transcription repressor HrcA (357 aa).

Belongs to the HrcA family.

In terms of biological role, negative regulator of class I heat shock genes (grpE-dnaK-dnaJ and groELS operons). Prevents heat-shock induction of these operons. The protein is Heat-inducible transcription repressor HrcA of Anabaena sp. (strain L31).